The sequence spans 400 residues: Formate-dependent phosphoribosylglycinamide formyltransferase (400 aa).

N(1)-(5-phospho-beta-D-ribosyl)glycinamide contacts are provided by residues 22-23 (EL) and Glu-82. Residues Arg-115, Lys-156, 161 to 166 (SSGKGQ), 196 to 199 (EGFI), and Glu-204 contribute to the ATP site. Residues 120 to 309 (RLAAETLGLP…EFALHARAIL (190 aa)) enclose the ATP-grasp domain. The Mg(2+) site is built by Glu-268 and Glu-280. Residues Asp-287, Lys-361, and 368-369 (RR) contribute to the N(1)-(5-phospho-beta-D-ribosyl)glycinamide site.

It belongs to the PurK/PurT family. In terms of assembly, homodimer.

The enzyme catalyses N(1)-(5-phospho-beta-D-ribosyl)glycinamide + formate + ATP = N(2)-formyl-N(1)-(5-phospho-beta-D-ribosyl)glycinamide + ADP + phosphate + H(+). Its pathway is purine metabolism; IMP biosynthesis via de novo pathway; N(2)-formyl-N(1)-(5-phospho-D-ribosyl)glycinamide from N(1)-(5-phospho-D-ribosyl)glycinamide (formate route): step 1/1. Involved in the de novo purine biosynthesis. Catalyzes the transfer of formate to 5-phospho-ribosyl-glycinamide (GAR), producing 5-phospho-ribosyl-N-formylglycinamide (FGAR). Formate is provided by PurU via hydrolysis of 10-formyl-tetrahydrofolate. This Xanthomonas oryzae pv. oryzae (strain KACC10331 / KXO85) protein is Formate-dependent phosphoribosylglycinamide formyltransferase.